The primary structure comprises 206 residues: Thymidylate kinase (206 aa).

Position 11–18 (11–18) interacts with ATP; the sequence is GIDGAGKT.

This sequence belongs to the thymidylate kinase family.

The enzyme catalyses dTMP + ATP = dTDP + ADP. Functionally, phosphorylation of dTMP to form dTDP in both de novo and salvage pathways of dTTP synthesis. The sequence is that of Thymidylate kinase from Burkholderia vietnamiensis (strain G4 / LMG 22486) (Burkholderia cepacia (strain R1808)).